Reading from the N-terminus, the 304-residue chain is Ferrochelatase (304 aa).

Fe cation-binding residues include H169 and E241.

The protein belongs to the ferrochelatase family.

It is found in the cytoplasm. It catalyses the reaction heme b + 2 H(+) = protoporphyrin IX + Fe(2+). Its pathway is porphyrin-containing compound metabolism; protoheme biosynthesis; protoheme from protoporphyrin-IX: step 1/1. Its function is as follows. Catalyzes the ferrous insertion into protoporphyrin IX. The polypeptide is Ferrochelatase (Thermoplasma volcanium (strain ATCC 51530 / DSM 4299 / JCM 9571 / NBRC 15438 / GSS1)).